A 1149-amino-acid chain; its full sequence is Nitric oxide synthase, inducible (1149 aa).

Residues K22 to H83 form a disordered region. Residues D23–N27 carry the DINNN-motif; mediates interaction with SPSB1, SPSB2 and SPSB4 motif. Residues K50–G61 show a composition bias toward polar residues. Residues C109 and C114 each coordinate Zn(2+). (6R)-L-erythro-5,6,7,8-tetrahydrobiopterin is bound at residue S117. C199 lines the heme b pocket. Q262, W371, Y372, and E376 together coordinate L-arginine. Positions 380, 461, 462, and 475 each coordinate (6R)-L-erythro-5,6,7,8-tetrahydrobiopterin. Y490 contacts heme b. The calmodulin-binding stretch occupies residues F514–S534. Residues A538 to F676 form the Flavodoxin-like domain. Positions 544, 545, 546, 548, and 549 each coordinate FMN. The residue at position 574 (Y574) is a Phosphotyrosine. FMN-binding residues include S590, T591, S627, R632, C634, E660, and Q664. Residues T729–P969 enclose the FAD-binding FR-type domain. Residue R749 participates in NADP(+) binding. FAD contacts are provided by H771, R905, Y907, S908, T923, and A925. T928 provides a ligand contact to NADP(+). 4 residues coordinate FAD: Y929, V942, C943, and S944. 8 residues coordinate NADP(+): T983, R1016, S1045, R1046, K1052, Y1054, Q1056, and D1089.

It belongs to the NOS family. Homodimer. Interacts with NHERF1. Interacts with GAPDH; induced by oxidatively-modified low-densitity lipoprotein (LDL(ox)). Interacts with S100A8 and S100A9 to form the iNOS-S100A8/9 transnitrosylase complex. Interacts with SPSB1, SPSB2 and SPSB4. Interacts with ELOC and CUL5 in the presence of SPSB1 or SPSB2 or SPSB4. Forms a complex with ASL, ASS1 and HSP90AA1; the complex regulates cell-autonomous L-arginine synthesis and citrulline recycling while channeling extracellular L-arginine to nitric oxide synthesis pathway. The cofactor is heme b. FAD serves as cofactor. It depends on FMN as a cofactor. Requires (6R)-L-erythro-5,6,7,8-tetrahydrobiopterin as cofactor. Post-translationally, polyubiquitinated; mediated by SPSB1, SPSB2 and SPSB4, leading to proteasomal degradation. In terms of tissue distribution, expressed in the lung and colon. Not detected in the heart, aorta, liver, kidney, and spleen.

It is found in the cytoplasm. The protein resides in the cytosol. It catalyses the reaction 2 L-arginine + 3 NADPH + 4 O2 + H(+) = 2 L-citrulline + 2 nitric oxide + 3 NADP(+) + 4 H2O. With respect to regulation, regulated by calcium/calmodulin. In terms of biological role, produces nitric oxide (NO) which is a messenger molecule with diverse functions throughout the body. In macrophages, NO mediates tumoricidal and bactericidal actions. Also has nitrosylase activity and mediates cysteine S-nitrosylation of cytoplasmic target proteins such PTGS2/COX2. As component of the iNOS-S100A8/9 transnitrosylase complex involved in the selective inflammatory stimulus-dependent S-nitrosylation of GAPDH implicated in regulation of the GAIT complex activity and probably multiple targets including ANXA5, EZR, MSN and VIM. Involved in inflammation, enhances the synthesis of pro-inflammatory mediators such as IL6 and IL8. The polypeptide is Nitric oxide synthase, inducible (NOS2) (Cavia porcellus (Guinea pig)).